The following is a 213-amino-acid chain: tRNA (guanine-N(7)-)-methyltransferase (213 aa).

Positions 43, 68, 95, and 117 each coordinate S-adenosyl-L-methionine. Residues D153 and T190–E193 each bind substrate.

It belongs to the class I-like SAM-binding methyltransferase superfamily. TrmB family.

It carries out the reaction guanosine(46) in tRNA + S-adenosyl-L-methionine = N(7)-methylguanosine(46) in tRNA + S-adenosyl-L-homocysteine. It functions in the pathway tRNA modification; N(7)-methylguanine-tRNA biosynthesis. Functionally, catalyzes the formation of N(7)-methylguanine at position 46 (m7G46) in tRNA. This Desulfitobacterium hafniense (strain DSM 10664 / DCB-2) protein is tRNA (guanine-N(7)-)-methyltransferase.